We begin with the raw amino-acid sequence, 371 residues long: dTDP-4-amino-4,6-dideoxy-D-glucose transaminase (371 aa).

Lys186 carries the N6-(pyridoxal phosphate)lysine modification.

The protein belongs to the DegT/DnrJ/EryC1 family. It depends on pyridoxal 5'-phosphate as a cofactor.

The enzyme catalyses dTDP-4-amino-4,6-dideoxy-D-glucose + 2-oxoglutarate = dTDP-4-dehydro-6-deoxy-alpha-D-glucose + L-glutamate. It functions in the pathway bacterial outer membrane biogenesis; lipopolysaccharide biosynthesis. In terms of biological role, catalyzes the conversion of dTDP-4-dehydro-6-deoxy-D-glucose (dTDP-D-Glc4O) to dTDP-4-amino-4,6-dideoxy-D-glucose (dTDP-D-Qui4N). The chain is dTDP-4-amino-4,6-dideoxy-D-glucose transaminase (vioA) from Escherichia coli.